The following is a 323-amino-acid chain: Transcription factor MYB56 (323 aa).

The segment covering M1–E14 has biased composition (basic and acidic residues). Positions M1–S84 are disordered. A compositionally biased stretch (polar residues) spans N27 to V60. Basic and acidic residues predominate over residues E66–L78. HTH myb-type domains lie at T88–L139 and D140–T194. DNA-binding regions (H-T-H motif) lie at residues W116–Q138 and W167–M190. Residues R192–S217 are disordered.

Forms homodimer. Interacts with the dephosphorylated active form of BES1 in the nucleus of quiescent center (QC) cells. Interacts with BPM1, BPM2, BPM3, BPM4, BPM5 and BPM6 at the promoter of FLOWERING LOCUS T (FT). As to expression, mostly expressed in flowers (at protein level) and siliques, and, to a lower extent, in roots, stems and leaves. Expressed in embryos (e.g. heart and torpedo stages) and cotyledons, and, at low levels, in roots and inflorescence. Accumulates specifically in root apical meristem quiescent center (QC) and vascular initial cells.

It is found in the nucleus. The protein localises to the cytoplasm. Its subcellular location is the cytosol. Acts as a cell-specific local repressor of quiescent center (QC) self-renewal by cell divisions in the primary root. Counteracts brassinosteroid (BR)-mediated cell division in the QC cells. Regulates maternally seed size, especially before the heart stage, promoting both endothelial cells expansion and cell number in the outer integument layer of the seed coat. Modulates the expression of genes involved in cell wall metabolism such as cell division and expansion. Negative regulator of flowering via the repression of FT transcription. The sequence is that of Transcription factor MYB56 from Arabidopsis thaliana (Mouse-ear cress).